We begin with the raw amino-acid sequence, 337 residues long: Basic membrane protein A2 (337 aa).

The N-terminal stretch at 1–17 (MNKLLLLILFECIIFLS) is a signal peptide. Cys18 is lipidated: N-palmitoyl cysteine. Cys18 is lipidated: S-diacylglycerol cysteine.

This sequence belongs to the BMP lipoprotein family. As to quaternary structure, monomer.

It localises to the cell inner membrane. Its function is as follows. Immunogenic protein. May be part of an ABC-type nucleoside uptake system involved in the purine salvage pathway. The chain is Basic membrane protein A2 (bmpA2) from Borrelia garinii subsp. bavariensis (strain ATCC BAA-2496 / DSM 23469 / PBi) (Borreliella bavariensis).